We begin with the raw amino-acid sequence, 429 residues long: Serine carboxypeptidase-like (429 aa).

Cystine bridges form between C58–C298, C226–C241, and C264–C269. Residue N76 is glycosylated (N-linked (GlcNAc...) asparagine). The active site involves S148. D336 is an active-site residue. C339 is a substrate binding site. Residue H393 is part of the active site. N-linked (GlcNAc...) asparagine glycans are attached at residues N414 and N417.

The protein belongs to the peptidase S10 family. Abundant in germinated embryos composed of leaf, root, and scutellum.

The chain is Serine carboxypeptidase-like (CBP31) from Oryza sativa subsp. japonica (Rice).